We begin with the raw amino-acid sequence, 156 residues long: Endoribonuclease YbeY (156 aa).

Residues His111, His115, and His121 each contribute to the Zn(2+) site.

Belongs to the endoribonuclease YbeY family. Zn(2+) serves as cofactor.

It localises to the cytoplasm. Its function is as follows. Single strand-specific metallo-endoribonuclease involved in late-stage 70S ribosome quality control and in maturation of the 3' terminus of the 16S rRNA. This Hahella chejuensis (strain KCTC 2396) protein is Endoribonuclease YbeY.